The sequence spans 449 residues: Cytochrome P450 monooxygenase iliC (449 aa).

A helical membrane pass occupies residues 28–44 (TFAITFMGVKQICTIEG). Residue C397 coordinates heme.

It belongs to the cytochrome P450 family. Heme serves as cofactor.

The protein localises to the membrane. It catalyses the reaction (3E,5S)-3-[(2E,4E,8S,10E,12Z)-1-hydroxy-4,8-dimethyltetradeca-2,4,10,12-tetraen-1-ylidene]-5-[(4-hydroxyphenyl)methyl]pyrrolidine-2,4-dione + reduced [NADPH--hemoprotein reductase] + O2 = 3-[(2E,4E,8S,10E,12Z)-4,8-dimethyltetradeca-2,4,10,12-tetraenoyl]-4-hydroxy-5-(4-hydroxyphenyl)-1,2-dihydropyridin-2-one + oxidized [NADPH--hemoprotein reductase] + 2 H2O. The protein operates within mycotoxin biosynthesis. Cytochrome P450 monooxygenase; part of the gene cluster that mediates the biosynthesis of ilicicolin H, a 4-hydroxy-2-pyridonealkaloid that has potent and broad antifungal activities by inhibiting the mitochondrial respiration chain. IliC catalyzes the ring expansion of the tetramate intermediate to the acyclic 2-pyridone intermediate that contains the trans bis-diene chain. The biosynthesis of ilicicolin H starts with formation of the tetramic acid by the hybrid PKS-NRPS synthetase iliA with the partnering trans-enoyl reductase iliB since iliA lacks a designated enoylreductase (ER) domain. The cytochrome P450 monooxygenase iliC then catalyzes the ring expansion of the tetramate to the acyclic 2-pyridone. The pericyclase iliD further converts the acyclic 2-pyridone into 8-epi-ilicicolin H. 8-epi-ilicicolin H might then spontaneously convert to ilicicolin H since ilicicolin H is produced in the absence of the epimerase iliE, in contrast to what was observed for the Talaromyces variabilis ilicolin H biosynthetic pathway. The protein is Cytochrome P450 monooxygenase iliC of Hypocrea jecorina (strain QM6a) (Trichoderma reesei).